Here is a 165-residue protein sequence, read N- to C-terminus: Large ribosomal subunit protein uL30 (165 aa).

Belongs to the universal ribosomal protein uL30 family. Part of the 50S ribosomal subunit.

This Thermoplasma volcanium (strain ATCC 51530 / DSM 4299 / JCM 9571 / NBRC 15438 / GSS1) protein is Large ribosomal subunit protein uL30.